A 337-amino-acid polypeptide reads, in one-letter code: Neurogenic differentiation factor 6 (337 aa).

The segment at 43-82 (LRGKSIKRAPGEETEKEEEEEDREEEDENGLPRRRGLRKK) is disordered. Residues 54–71 (EETEKEEEEEDREEEDEN) show a composition bias toward acidic residues. Positions 80–86 (RKKKTTK) match the Nuclear localization signal motif. Residues 94–146 (FRRQEANARERNRMHGLNDALDNLRKVVPCYSKTQKLSKIETLRLAKNYIWAL) enclose the bHLH domain.

Efficient DNA binding requires dimerization with another bHLH protein.

It localises to the nucleus. Activates E box-dependent transcription in collaboration with TCF3/E47. May be a trans-acting factor involved in the development and maintenance of the mammalian nervous system. Transactivates the promoter of its own gene. The chain is Neurogenic differentiation factor 6 (NEUROD6) from Bos taurus (Bovine).